The sequence spans 803 residues: H(+)/Cl(-) exchange transporter 7 (803 aa).

Residues 1 to 46 are disordered; sequence MANVSKKVSWSGRDRDDEEGAPLLRRTGQPDEETPLLNGAGPGARQ. The Cytoplasmic portion of the chain corresponds to 1–124; sequence MANVSKKVSW…TAFRTVEIKR (124 aa). At serine 9 the chain carries Phosphoserine. The next 2 helical transmembrane spans lie at 125-157 and 172-195; these read WVICALIGILTGLVACFIDIVVENLAGLKYRVI and FSLLLWATLNSAFVLVGSVIVAFI. The Selectivity filter part_1 signature appears at 201 to 205; the sequence is GSGIP. Position 202 (serine 202) interacts with chloride. Residues 204–211 constitute an intramembrane region (helical); it reads IPQIKCFL. 2 helical membrane-spanning segments follow: residues 221–239 and 245–262; these read RLKTLVIKVSGVILSVVGG and EGPMIHSGSVIAAGISQG. The Selectivity filter part_2 signature appears at 243-247; sequence GKEGP. 2 consecutive intramembrane regions (helical) follow at residues 286-298 and 302-310; these read FVSAGAAAGVSAA and PVGGVLFSL. Helical transmembrane passes span 320 to 339, 373 to 403, 408 to 430, 485 to 505, and 510 to 533; these read FLTWRIFFASMISTFTLNFV, IPVFIAMGVVGGILGAVFNALNYWLTMFRIR, PCLQVIEAMLVAAVTATVAFVLI, PMTLGLFTLVYFFLACWTYGL, and GVFIPSLLIGAAWGRLFGISMSYL. Residues 510-514 carry the Selectivity filter part_3 motif; the sequence is GVFIP. Phenylalanine 512 contributes to the chloride binding site. The segment at residues 543–557 is an intramembrane region (helical); it reads GKYALMGAAAQLGGI. The note=Loop between two helices intramembrane region spans 558–560; sequence VRM. An intramembrane region (helical) is located at residues 561–572; the sequence is TLSLTVIMMEAT. The segment at residues 573–576 is an intramembrane region (note=Loop between two helices); that stretch reads SNVT. The helical transmembrane segment at 577-595 threads the bilayer; it reads YGFPIMLVLMTAKIVGDVF. Over 596–803 the chain is Cytoplasmic; sequence IEGLYDMHIQ…GLEELSLAQT (208 aa). Tyrosine 600 contributes to the chloride binding site. CBS domains follow at residues 629–693 and 739–797; these read MSTP…VFVE and MNPS…GLEE. ATP is bound by residues 656 to 658 and 781 to 784; these read HNG and TRKD. Serine 799 is subject to Phosphoserine.

Belongs to the chloride channel (TC 2.A.49) family. ClC-7/CLCN7 subfamily. As to quaternary structure, chloride channel 7 are heteromers of alpha (CLCN7) and beta (OSTM1) subunits. In terms of tissue distribution, brain, testis, muscle and kidney.

It is found in the lysosome membrane. It carries out the reaction 2 chloride(in) + H(+)(out) = 2 chloride(out) + H(+)(in). Its function is as follows. Slowly voltage-gated channel mediating the exchange of chloride ions against protons. Functions as antiporter and contributes to the acidification of the lysosome lumen and may be involved in maintaining lysosomal pH. The CLC channel family contains both chloride channels and proton-coupled anion transporters that exchange chloride or another anion for protons. The presence of conserved gating glutamate residues is typical for family members that function as antiporters. The protein is H(+)/Cl(-) exchange transporter 7 (Clcn7) of Rattus norvegicus (Rat).